Reading from the N-terminus, the 179-residue chain is NADH-quinone oxidoreductase subunit B (179 aa).

The [4Fe-4S] cluster site is built by cysteine 52, cysteine 53, cysteine 117, and cysteine 147.

Belongs to the complex I 20 kDa subunit family. NDH-1 is composed of 14 different subunits. Subunits NuoB, C, D, E, F, and G constitute the peripheral sector of the complex. Requires [4Fe-4S] cluster as cofactor.

It is found in the cell inner membrane. The catalysed reaction is a quinone + NADH + 5 H(+)(in) = a quinol + NAD(+) + 4 H(+)(out). NDH-1 shuttles electrons from NADH, via FMN and iron-sulfur (Fe-S) centers, to quinones in the respiratory chain. The immediate electron acceptor for the enzyme in this species is believed to be ubiquinone. Couples the redox reaction to proton translocation (for every two electrons transferred, four hydrogen ions are translocated across the cytoplasmic membrane), and thus conserves the redox energy in a proton gradient. The polypeptide is NADH-quinone oxidoreductase subunit B (Ehrlichia chaffeensis (strain ATCC CRL-10679 / Arkansas)).